Consider the following 1531-residue polypeptide: MATGDGIIAAPPSLESSSLDPLHVLPASSSTAARSLATSIPALTASFSVVSGFSSHLPPPPVTPPAPSTMVGWIGWIFSFIFQVIPSVLYWIVTFTTITLPTWLFTLFSMSLTFTMNFTTLLLIALAVVSTISWFIRYRFLNMYSRLPPEPQRKEPQLDLFPDVPDSDTKPGLANYLDEFLSAIKVFGYLERPVFHELTRTMQTRKLIAGETLLLEEEKGFCLVVDGLVQIFVKSMRDRKSGSDEELNRMAGESSDEDDHRPDGRQGYQLLTEVKNGASMSSLFSILSLFTEDVQLRYADSSASSASSIGPGLAIGPDSFPASPREMDDSPHVYQGDRLDPASHRNSTAEDLPAVPPLNLGESQVPPAHSARSESRKYSGKTRRKSVHPDIVARAMVDTTIAIIPASAFRRLTRVYPKATAHIVQVILTRLQRVTFATAHSYLGLNNEVLGIEKQMTKFTTYDLPNELRGSALDRLKDKFIKERDRLGQEEVTKGIALHNPYGGRRPRSSSFRRKEAALQAKMVASKRPVSMVAQDSALSDRENSGVSPGDLLSTIQLSRFGPRYEHLAPRLLSPLTEKEHSPLRSPSPMIPGRASPFHRKESLDEDALFRESILECIMKGIGLTGSTNDFLRKSSHPSGDVSPKLLSYDSRRQKAVFSNNAFGFIDPYEGSADGESESMMSMSVTSAGGTSPIVNLREELRNDIEIVYFPQGSVLVEQGERHPGLYYVVDGFLDVGIPVDDKEEDLVGSSRPAHEELFPMLRRTNTSSSRVSGSAAAANDPRRKKQSRRSLYLIKPGGIQGYVGAVASYRSYTDVVAKTDVYVGFLPRASLERIAERYPLALLTLAKRLTSLLPRLLLHIDFALEWVQVSAGQVIYHQGDESDAIYLALNGRLRSVHEGPNGKMTVVGEYGQGESVGELEVMTESTRPATLHAIRDTELAKFPRTLFNSLAQEHPGITIQVSKLIAQRMRDLVETPLAEKGGEPGVSGTVKTAKSTLNLRTVGILPVTAGVPVVEFGNRLLQALHQIGVTNGATSLNQAAILNHLGRHAFSKMGKLKLSQYLADLEEKYGMVLYIADTSVNSPWTQTCITQADCILLVGLAESTPSIGEYERFLLGMKTTARKELVLLHGERYCPPGLTRQWLKNRVWINGGHHHVQMAFRLTAEPSHPQTKRFGTVLKQRVQVIQAEIQKYTSRRIRQSPLYSAQTPFKGDFHRLARRLCGRSVGLVLGGGGARGIAQVGVIKALEEAGIPIDVIGGTSIGSFIGALYARDADVVPMYGRAKKFAGRMGSIWRFALDLTYPTVSYTTGHEFNRGIFKTFGDSQIEDFWLEFYCNTTNISRSRAEYHSSGYTWRYVRASMSLAGLIPPICDEGSMLLDGGYIDNLTVDHMKGLGADVIFAVDVGSIDDNTPQVYGDSLSGFWAVVNRWNPFSSCPNPPTLSEIQARLAYVSSIENLERAKNTPGCLYMRPPIDPYGTLDFAKFDEIYQLGYAYGKNYLEKLKREGSLPLPEETEEKKKLQRTLAPRRASI.

The Cytoplasmic portion of the chain corresponds to 1 to 72; the sequence is MATGDGIIAA…TPPAPSTMVG (72 aa). Residues 73-93 traverse the membrane as a helical segment; the sequence is WIGWIFSFIFQVIPSVLYWIV. Residues 94–115 are Lumenal-facing; sequence TFTTITLPTWLFTLFSMSLTFT. Residues 116-136 traverse the membrane as a helical segment; the sequence is MNFTTLLLIALAVVSTISWFI. Residues 137–1531 are Cytoplasmic-facing; the sequence is RYRFLNMYSR…RTLAPRRASI (1395 aa). 3 disordered regions span residues 242–265, 303–385, and 766–789; these read GSDE…PDGR, ASSA…TRRK, and NTSS…KQSR. Over residues 325-343 the composition is skewed to basic and acidic residues; the sequence is REMDDSPHVYQGDRLDPAS. A nucleoside 3',5'-cyclic phosphate-binding positions include 689–809 and 849–969; these read GGTS…AVAS and RLTS…IAQR. The segment covering 768–779 has biased composition (low complexity); that stretch reads SSSRVSGSAAAA. The region spanning 1228–1392 is the PNPLA domain; sequence LVLGGGGARG…IDNLTVDHMK (165 aa). The GXGXXG motif lies at 1232–1237; that stretch reads GGGARG. A GXSXG motif is present at residues 1259–1263; sequence GTSIG. Ser1261 serves as the catalytic Nucleophile. The Proton acceptor role is filled by Asp1379. Positions 1379–1381 match the DGA/G motif; sequence DGG. Residues 1510-1531 form a disordered region; sequence LPEETEEKKKLQRTLAPRRASI.

The protein belongs to the NTE family.

The protein localises to the endoplasmic reticulum membrane. The catalysed reaction is a 1-acyl-sn-glycero-3-phosphocholine + H2O = sn-glycerol 3-phosphocholine + a fatty acid + H(+). With respect to regulation, inhibited by organophosphorus esters. In terms of biological role, intracellular phospholipase B that catalyzes the double deacylation of phosphatidylcholine (PC) to glycerophosphocholine (GroPCho). Plays an important role in membrane lipid homeostasis. Responsible for the rapid PC turnover in response to inositol, elevated temperatures, or when choline is present in the growth medium. The chain is Lysophospholipase nte1 (nte1) from Aspergillus niger (strain ATCC MYA-4892 / CBS 513.88 / FGSC A1513).